A 434-amino-acid polypeptide reads, in one-letter code: Serine hydroxymethyltransferase (434 aa).

(6S)-5,6,7,8-tetrahydrofolate is bound by residues leucine 133 and 137–139; that span reads GHL. N6-(pyridoxal phosphate)lysine is present on lysine 242.

This sequence belongs to the SHMT family. In terms of assembly, homodimer. Pyridoxal 5'-phosphate serves as cofactor.

Its subcellular location is the cytoplasm. It carries out the reaction (6R)-5,10-methylene-5,6,7,8-tetrahydrofolate + glycine + H2O = (6S)-5,6,7,8-tetrahydrofolate + L-serine. It participates in one-carbon metabolism; tetrahydrofolate interconversion. It functions in the pathway amino-acid biosynthesis; glycine biosynthesis; glycine from L-serine: step 1/1. In terms of biological role, catalyzes the reversible interconversion of serine and glycine with tetrahydrofolate (THF) serving as the one-carbon carrier. This reaction serves as the major source of one-carbon groups required for the biosynthesis of purines, thymidylate, methionine, and other important biomolecules. Also exhibits THF-independent aldolase activity toward beta-hydroxyamino acids, producing glycine and aldehydes, via a retro-aldol mechanism. The protein is Serine hydroxymethyltransferase of Methylorubrum populi (strain ATCC BAA-705 / NCIMB 13946 / BJ001) (Methylobacterium populi).